We begin with the raw amino-acid sequence, 224 residues long: Synaptonemal complex protein 3 (224 aa).

2 coiled-coil regions span residues 63 to 97 (RVKCAAQRESLERQLQDLTATDNKLSEQKRDWEER) and 137 to 171 (HDSMNGQFNSLKNNLDELNIEKKQLEVAIADQSST).

In terms of assembly, interacts with gras-1. Interacts with brc-1 and brd-1.

It is found in the chromosome. In terms of biological role, plays a role in early meiotic events; during prophase I contributes to synaptonemal complex (SC) assembly, synapsis and chiasmata formation and stabilization of homologous chromosomes pairing. Required for restricting SC assembly to bridge paired chromosome axes. Required for the timely progression of meiotic crossover recombination. Required for the synapsis checkpoint. The chain is Synaptonemal complex protein 3 from Caenorhabditis elegans.